The primary structure comprises 383 residues: Fatty acid hydroxylase ahd1 (383 aa).

4 helical membrane passes run 84-104 (VMGL…NKSW), 123-143 (TVHT…LFAL), 172-192 (LIPV…IIYY), and 214-236 (VAQW…RALH). The Fatty acid hydroxylase domain maps to 217-341 (WLVCLLMEDI…VGLLDAIFKT (125 aa)). N-linked (GlcNAc...) asparagine glycosylation occurs at N342.

Belongs to the sterol desaturase family.

It is found in the membrane. It functions in the pathway secondary metabolite biosynthesis. Its function is as follows. Fatty acid hydroxylase; part of the gene cluster that mediates the biosynthesis of the glycolipid biosurfactant ustilagic acid (UA). UA is a secreted cellobiose glycolipid that is toxic for many microorganisms and confers biocontrol activity to U.maydis. UA consists of 15,16-dihydroxypalmitic or 2,15,16-trihydroxypalmitic acid, which is O-glycosidically linked to cellobiose at its terminal hydroxyl group. In addition, the cellobiose moiety is acetylated and acylated with a short-chain hydroxy fatty acid. UA biosynthesis starts with omega-hydroxylation of palmitic acid catalyzed by the cytochrome P450 monooxygenase cyp1. Terminal hydroxylation of palmitic acid precedes subterminal hydroxylation catalyzed by the cytochrome P450 monooxygenase cyp2. Sequential glucosylation of the hydroxy fatty acid is probably catalyzed by the glycosyltransferase ugt1. The cellobiose lipid is further decorated by acetylation of the proximal glucose residue and by acylation with a short-chain beta-hydroxy fatty acid at the distal glucose residue. The acyltransferase uat1 may be a good candidate for catalyzing either acetylation or acylation of the cellobiose lipid. The fatty acid synthase fas2 may be involved in synthesis of the carbon backbone of the short-chain beta-hydroxy fatty acid esterified to the cellobiose disaccharide. The secreted UA consists of a mixture of both alpha-hydroxylated and non-hydroxylated glycolipids; therefore, alpha-hydroxylation of the long-chain fatty, catalyzed by the fatty acid hydroxylase ahd1, occurs late in UA biosynthesis and may be the last step before secretion. The sequence is that of Fatty acid hydroxylase ahd1 from Mycosarcoma maydis (Corn smut fungus).